The primary structure comprises 777 residues: Endonuclease MutS2 (777 aa).

328–335 (GPNTGGKT) is a binding site for ATP. The 76-residue stretch at 702–777 (LDIRGMNTLE…GDGATEVYLK (76 aa)) folds into the Smr domain.

This sequence belongs to the DNA mismatch repair MutS family. MutS2 subfamily. Homodimer. Binds to stalled ribosomes, contacting rRNA.

Its function is as follows. Endonuclease that is involved in the suppression of homologous recombination and thus may have a key role in the control of bacterial genetic diversity. In terms of biological role, acts as a ribosome collision sensor, splitting the ribosome into its 2 subunits. Detects stalled/collided 70S ribosomes which it binds and splits by an ATP-hydrolysis driven conformational change. Acts upstream of the ribosome quality control system (RQC), a ribosome-associated complex that mediates the extraction of incompletely synthesized nascent chains from stalled ribosomes and their subsequent degradation. Probably generates substrates for RQC. The polypeptide is Endonuclease MutS2 (Carboxydothermus hydrogenoformans (strain ATCC BAA-161 / DSM 6008 / Z-2901)).